Reading from the N-terminus, the 256-residue chain is Transmembrane protein 74B (256 aa).

The tract at residues 1–111 is disordered; it reads MPPAQGYEFA…LSLHSEEGPA (111 aa). A compositionally biased stretch (low complexity) spans 80–96; it reads RLGSSPSPPGGVSSLPR. Over residues 97-108 the composition is skewed to basic and acidic residues; it reads SQRDDLSLHSEE. Transmembrane regions (helical) follow at residues 123–143 and 177–197; these read FVSA…AYAI and IIAG…LLMV.

This sequence belongs to the TMEM74 family.

The protein localises to the membrane. The sequence is that of Transmembrane protein 74B (TMEM74B) from Homo sapiens (Human).